Here is a 90-residue protein sequence, read N- to C-terminus: Mitochondrial import inner membrane translocase subunit Tim9 (90 aa).

The Twin CX3C motif motif lies at C24 to C48. 2 cysteine pairs are disulfide-bonded: C24-C48 and C28-C44.

It belongs to the small Tim family. Heterohexamer; composed of 3 copies of tim-9/tin-9.1 and 3 copies of tim-10/tin-10, named soluble 70 kDa complex. The complex associates with the tim-22 component of the TIM22 complex. Interacts with multi-pass transmembrane proteins in transit.

Its subcellular location is the mitochondrion inner membrane. In terms of biological role, mitochondrial intermembrane chaperone that participates in the import and insertion of multi-pass transmembrane proteins into the mitochondrial inner membrane. May also be required for the transfer of beta-barrel precursors from the TOM complex to the sorting and assembly machinery (SAM complex) of the outer membrane. Acts as a chaperone-like protein that protects the hydrophobic precursors from aggregation and guide them through the mitochondrial intermembrane space. The protein is Mitochondrial import inner membrane translocase subunit Tim9 (tin-9.1) of Caenorhabditis elegans.